Here is a 312-residue protein sequence, read N- to C-terminus: Apulose-4-phosphate transketolase subunit B (312 aa).

It belongs to the transketolase family. In terms of assembly, probable heterodimer composed of AptA and AptB. Thiamine diphosphate is required as a cofactor.

The enzyme catalyses apulose 4-phosphate + D-glyceraldehyde 3-phosphate = D-xylulose 5-phosphate + dihydroxyacetone phosphate. It functions in the pathway carbohydrate metabolism. Its function is as follows. Involved in catabolism of D-apiose. Catalyzes the transfer of the glycolaldehyde group from apulose-4-phosphate to D-glyceraldehyde 3-phosphate, generating dihydroxyacetone phosphate and D-xylulose-5-phosphate. This chain is Apulose-4-phosphate transketolase subunit B, found in Phocaeicola vulgatus (strain ATCC 8482 / DSM 1447 / JCM 5826 / CCUG 4940 / NBRC 14291 / NCTC 11154) (Bacteroides vulgatus).